A 425-amino-acid chain; its full sequence is Monoacylglycerol lipase ABHD2 (425 aa).

The Cytoplasmic segment spans residues 1–9 (MNAMLETPE). A helical; Signal-anchor for type II membrane protein membrane pass occupies residues 10 to 30 (LPAVFDGVKLAAVAAVLYVIV). Residues 31–425 (RCLNLKSPTA…DTEQVEADLE (395 aa)) lie on the Extracellular side of the membrane. Residues 128-382 (MVICPGIANH…HGGHLGFFEG (255 aa)) enclose the AB hydrolase-1 domain. The N-linked (GlcNAc...) asparagine glycan is linked to asparagine 136. Serine 207 (nucleophile) is an active-site residue. Catalysis depends on charge relay system residues aspartate 345 and histidine 376. A glycan (N-linked (GlcNAc...) asparagine) is linked at asparagine 410.

The protein belongs to the AB hydrolase superfamily. AB hydrolase 4 family.

It localises to the cell membrane. The enzyme catalyses Hydrolyzes glycerol monoesters of long-chain fatty acids.. It catalyses the reaction an acetyl ester + H2O = an aliphatic alcohol + acetate + H(+). It carries out the reaction a triacylglycerol + H2O = a diacylglycerol + a fatty acid + H(+). The catalysed reaction is 2-(5Z,8Z,11Z,14Z-eicosatetraenoyl)-glycerol + H2O = glycerol + (5Z,8Z,11Z,14Z)-eicosatetraenoate + H(+). The enzyme catalyses a butanoate ester + H2O = an aliphatic alcohol + butanoate + H(+). It catalyses the reaction hexadecanoate ester + H2O = an aliphatic alcohol + hexadecanoate + H(+). Acylglycerol lipase activity is activated upon binding to progesterone. Functionally, progesterone-dependent acylglycerol lipase that catalyzes hydrolysis of endocannabinoid arachidonoylglycerol (AG) from cell membrane. Acts as a progesterone receptor: progesterone-binding activates the acylglycerol lipase activity, mediating degradation of 1-arachidonoylglycerol (1AG) and 2-arachidonoylglycerol (2AG) to glycerol and arachidonic acid (AA). Also displays an ester hydrolase activity against acetyl ester, butanoate ester and hexadecanoate ester. Plays a key role in sperm capacitation in response to progesterone by mediating degradation of 2AG, an inhibitor of the sperm calcium channel CatSper, leading to calcium influx via CatSper and sperm activation. May also play a role in smooth muscle cells migration. The polypeptide is Monoacylglycerol lipase ABHD2 (ABHD2) (Macaca fascicularis (Crab-eating macaque)).